The primary structure comprises 684 residues: MPDAFCRDWTSEMGANYSMSKKRHEELKKIISEHDHNYHVLDKPTITDYEYDQLFAELLDIEKNPKGLDLSDSPSQRVGGTVLEGFTKAQHRLPMLSLANSYSPEDIFEFDERVRKFLNTEDPVEYLCELKFDGLSMELIYENGQLVRAITRGDGTVGEDVTHNIKTIKSIPLKLSHKNPPPLLEVRGEVLMFKEDFARLNETQQENGQQTFANPRNAAAGTVRQLDSRIAASRPLRFFGYALGAVEGETFNTQKNIQEYFNDHGIPTVLPYKEDLLVVAKGPEEVVKYYHHIEKVRPKLPFDIDGVVIKVNSLRLQEDLGLVARSPRWATAAKFKPEQAQTTVEDIVVQVGRTGALTPVAIMKPVKVGGVTVTNATLHNQDEITRKDIRIGDTVIIQRAGDVIPEVVEVVNPDKRPADRLPYSIPERCPACDSVAVKAEGEVVTRCVNPLCIAVVKESLKHFVARRAMNIDKVGDRLIETLVDNKLLTRFSDFYRLTKEQILSLERQGDKSADNIIKSIENSKNPTLARFIFALGIRFVGEQTGKHLADHFLTIDKFLEASEEELLQVPEIGAKVAKSIRDWTGNPKLVDEVKAMIELGVKIAGPVRAQEGSLSGMSFLITGTLPVKRDDAKDLIERNGGKILGSVSSKLNYLVVGDDPGSKVEKAQGLGVKIISWEELQAMI.

Residues 48-52 (DYEYD), 97-98 (SL), and E129 contribute to the NAD(+) site. The active-site N6-AMP-lysine intermediate is the K131. The NAD(+) site is built by R152, E189, K310, and K334. 4 residues coordinate Zn(2+): C429, C432, C447, and C452. One can recognise a BRCT domain in the interval 609–684 (AQEGSLSGMS…ISWEELQAMI (76 aa)).

The protein belongs to the NAD-dependent DNA ligase family. LigA subfamily. Mg(2+) serves as cofactor. The cofactor is Mn(2+).

It catalyses the reaction NAD(+) + (deoxyribonucleotide)n-3'-hydroxyl + 5'-phospho-(deoxyribonucleotide)m = (deoxyribonucleotide)n+m + AMP + beta-nicotinamide D-nucleotide.. Its function is as follows. DNA ligase that catalyzes the formation of phosphodiester linkages between 5'-phosphoryl and 3'-hydroxyl groups in double-stranded DNA using NAD as a coenzyme and as the energy source for the reaction. It is essential for DNA replication and repair of damaged DNA. The chain is DNA ligase from Bdellovibrio bacteriovorus (strain ATCC 15356 / DSM 50701 / NCIMB 9529 / HD100).